The chain runs to 77 residues: DNA-directed RNA polymerase subunit Rpo5 (77 aa).

This sequence belongs to the archaeal Rpo5/eukaryotic RPB5 RNA polymerase subunit family. In terms of assembly, part of the RNA polymerase complex.

It localises to the cytoplasm. It carries out the reaction RNA(n) + a ribonucleoside 5'-triphosphate = RNA(n+1) + diphosphate. In terms of biological role, DNA-dependent RNA polymerase (RNAP) catalyzes the transcription of DNA into RNA using the four ribonucleoside triphosphates as substrates. The polypeptide is DNA-directed RNA polymerase subunit Rpo5 (Methanosphaera stadtmanae (strain ATCC 43021 / DSM 3091 / JCM 11832 / MCB-3)).